Here is a 300-residue protein sequence, read N- to C-terminus: Dioxygenase FUM3 (300 aa).

3 residues coordinate Fe cation: His-146, Asp-148, and His-222.

Belongs to the PhyH family. Homodimer. It depends on Fe cation as a cofactor.

The protein operates within mycotoxin biosynthesis. Its function is as follows. Dioxygenase; part of the gene cluster that mediates the biosynthesis of fumonisins B1 (FB1), B2 (FB2), B3 (FB3), and B4 (FB4), which are carcinogenic mycotoxins. Within the pathway, FUM3 performs the C-5 hydroxylation present in FB1 and FB2 and which occurs late in the biosynthesis. The biosynthesis starts with the FUM1-catalyzed carbon chain assembly from one molecule of acetyl-CoA, eight molecules of malonyl-CoA, and two molecules of methionine (in S-adenosyl form). The C18 polyketide chain is released from the enzyme by a nucleophilic attack of a carbanion, which is derived from R-carbon of alanine by decarboxylation, on the carbonyl carbon of polyketide acyl chain. This step is catalyzed by the pyridoxal 5'-phosphate-dependent aminoacyl transferase FUM8. The resultant 3-keto intermediate is then stereospecifically reduced to a 3-hydroxyl product by reductase FUM13. Subsequent oxidations at C-10 by the cytochrome P450 monooxygenase FUM2, C-14 and C-15 by FUM6, FUM12 or FUM15, tricarballylic esterification of the hydroxyl groups on C-14 and C-15 by acyltransferase FUM14, and C-5 hydroxylation by 2-keto-glutarate-dependent dioxygenase FUM3 furnish the biosynthesis of fumonisins. The tricarballylic moieties are most likely derived from the citric acid cycle, and their addition to the carbon backbone may involve FUM7, FUM10, FUM11 and FUM14. The sequence is that of Dioxygenase FUM3 from Gibberella moniliformis (strain M3125 / FGSC 7600) (Maize ear and stalk rot fungus).